The primary structure comprises 207 residues: Dephospho-CoA kinase (207 aa).

A DPCK domain is found at 10-207; that stretch reads ILGLTGGIGS…FYLTLKGGQP (198 aa). Residue 18-23 coordinates ATP; it reads GSGKSA.

Belongs to the CoaE family.

The protein localises to the cytoplasm. It carries out the reaction 3'-dephospho-CoA + ATP = ADP + CoA + H(+). It functions in the pathway cofactor biosynthesis; coenzyme A biosynthesis; CoA from (R)-pantothenate: step 5/5. Its function is as follows. Catalyzes the phosphorylation of the 3'-hydroxyl group of dephosphocoenzyme A to form coenzyme A. In Pseudomonas putida (strain ATCC 47054 / DSM 6125 / CFBP 8728 / NCIMB 11950 / KT2440), this protein is Dephospho-CoA kinase.